A 211-amino-acid chain; its full sequence is Adenylate kinase (211 aa).

13-18 (GAGKGT) lines the ATP pocket. Positions 33–62 (STGDILRVAVANKTKLGLEAKKFMDAGQLV) are NMP. Residues T34, R39, 60 to 62 (QLV), 88 to 91 (GFPR), and Q95 each bind AMP. An LID region spans residues 129 to 161 (GRRTSKVTGKIYHIKFNPPVDEKPEDLVQRADD). ATP-binding positions include R130 and 139 to 140 (IY). Residues R158 and R169 each coordinate AMP. Residue K197 coordinates ATP.

It belongs to the adenylate kinase family. Monomer.

Its subcellular location is the cytoplasm. It catalyses the reaction AMP + ATP = 2 ADP. The protein operates within purine metabolism; AMP biosynthesis via salvage pathway; AMP from ADP: step 1/1. Catalyzes the reversible transfer of the terminal phosphate group between ATP and AMP. Plays an important role in cellular energy homeostasis and in adenine nucleotide metabolism. The protein is Adenylate kinase of Fusobacterium nucleatum subsp. nucleatum (strain ATCC 25586 / DSM 15643 / BCRC 10681 / CIP 101130 / JCM 8532 / KCTC 2640 / LMG 13131 / VPI 4355).